The primary structure comprises 243 residues: Ubiquinone biosynthesis O-methyltransferase (243 aa).

Positions 44, 64, 85, and 129 each coordinate S-adenosyl-L-methionine.

It belongs to the methyltransferase superfamily. UbiG/COQ3 family.

It carries out the reaction a 3-demethylubiquinol + S-adenosyl-L-methionine = a ubiquinol + S-adenosyl-L-homocysteine + H(+). The catalysed reaction is a 3-(all-trans-polyprenyl)benzene-1,2-diol + S-adenosyl-L-methionine = a 2-methoxy-6-(all-trans-polyprenyl)phenol + S-adenosyl-L-homocysteine + H(+). Its pathway is cofactor biosynthesis; ubiquinone biosynthesis. Functionally, O-methyltransferase that catalyzes the 2 O-methylation steps in the ubiquinone biosynthetic pathway. This is Ubiquinone biosynthesis O-methyltransferase from Cronobacter sakazakii (strain ATCC BAA-894) (Enterobacter sakazakii).